Consider the following 150-residue polypeptide: MKVMATGAFDILHPGHGLYLEKAKELGGEDAVLAVVIARDSTVKKKKRIPVIDENQRLEMIKYLKPVDEAYIGHDGDMFEIVEEIKPDIIAIGFDQGHDVNKLQEELDKRGIKAKAMRVEAHRIADLDSTCKIIKKIRNSDFEEDYVNCD.

Residues 8 to 9, 13 to 16, Asp95, and His122 contribute to the ATP site; these read AF and HPGH.

This sequence belongs to the archaeal FAD synthase family. Homodimer. A divalent metal cation serves as cofactor.

The enzyme catalyses FMN + ATP + H(+) = FAD + diphosphate. It functions in the pathway cofactor biosynthesis; FAD biosynthesis; FAD from FMN: step 1/1. Its function is as follows. Catalyzes the transfer of the AMP portion of ATP to flavin mononucleotide (FMN) to produce flavin adenine dinucleotide (FAD) coenzyme. This chain is FAD synthase, found in Methanobrevibacter ruminantium (strain ATCC 35063 / DSM 1093 / JCM 13430 / OCM 146 / M1) (Methanobacterium ruminantium).